We begin with the raw amino-acid sequence, 310 residues long: Protein-L-isoaspartate O-methyltransferase (310 aa).

A disordered region spans residues 1 to 41 (MSGERAKRFPLALEDLKRAPRKSEGRPGERQTAGAVPKAAD). The span at 14-29 (EDLKRAPRKSEGRPGE) shows a compositional bias: basic and acidic residues. The active site involves Ser-157.

This sequence belongs to the methyltransferase superfamily. L-isoaspartyl/D-aspartyl protein methyltransferase family.

Its subcellular location is the cytoplasm. The enzyme catalyses [protein]-L-isoaspartate + S-adenosyl-L-methionine = [protein]-L-isoaspartate alpha-methyl ester + S-adenosyl-L-homocysteine. Functionally, catalyzes the methyl esterification of L-isoaspartyl residues in peptides and proteins that result from spontaneous decomposition of normal L-aspartyl and L-asparaginyl residues. It plays a role in the repair and/or degradation of damaged proteins. This chain is Protein-L-isoaspartate O-methyltransferase, found in Burkholderia cenocepacia (strain HI2424).